The sequence spans 233 residues: Adenosylcobinamide-GDP ribazoletransferase (233 aa).

7 consecutive transmembrane segments (helical) span residues 24–44, 46–66, 96–116, 117–137, 158–178, 181–198, and 209–229; these read LWALPLLAPLTSALATLVLYL, LPLSNVLAILALYFTTGLLHL, IAGVFAVVMVFLLQVYSLPLL, PFYALYLAELNSKFAMLLALA, QLTLGTALYLLLLLPVAYIEP, ISSLLGLLAGAYVIRLSL, and IGAVAEITRAGALLGMAVVWV.

This sequence belongs to the CobS family. The cofactor is Mg(2+).

It is found in the cell membrane. The catalysed reaction is alpha-ribazole + adenosylcob(III)inamide-GDP = adenosylcob(III)alamin + GMP + H(+). The enzyme catalyses alpha-ribazole 5'-phosphate + adenosylcob(III)inamide-GDP = adenosylcob(III)alamin 5'-phosphate + GMP + H(+). The protein operates within cofactor biosynthesis; adenosylcobalamin biosynthesis; adenosylcobalamin from cob(II)yrinate a,c-diamide: step 7/7. Its function is as follows. Joins adenosylcobinamide-GDP and alpha-ribazole to generate adenosylcobalamin (Ado-cobalamin). Also synthesizes adenosylcobalamin 5'-phosphate from adenosylcobinamide-GDP and alpha-ribazole 5'-phosphate. The polypeptide is Adenosylcobinamide-GDP ribazoletransferase (Thermococcus gammatolerans (strain DSM 15229 / JCM 11827 / EJ3)).